We begin with the raw amino-acid sequence, 250 residues long: Ribonuclease PH (250 aa).

Phosphate is bound by residues Arg99 and 137–139 (GTR).

It belongs to the RNase PH family. As to quaternary structure, homohexameric ring arranged as a trimer of dimers.

The enzyme catalyses tRNA(n+1) + phosphate = tRNA(n) + a ribonucleoside 5'-diphosphate. Functionally, phosphorolytic 3'-5' exoribonuclease that plays an important role in tRNA 3'-end maturation. Removes nucleotide residues following the 3'-CCA terminus of tRNAs; can also add nucleotides to the ends of RNA molecules by using nucleoside diphosphates as substrates, but this may not be physiologically important. Probably plays a role in initiation of 16S rRNA degradation (leading to ribosome degradation) during starvation. The polypeptide is Ribonuclease PH (Bordetella parapertussis (strain 12822 / ATCC BAA-587 / NCTC 13253)).